The chain runs to 60 residues: Large ribosomal subunit protein uL30 (60 aa).

The protein belongs to the universal ribosomal protein uL30 family. As to quaternary structure, part of the 50S ribosomal subunit.

The protein is Large ribosomal subunit protein uL30 of Shewanella loihica (strain ATCC BAA-1088 / PV-4).